A 2442-amino-acid chain; its full sequence is CREB-binding protein (2442 aa).

2 disordered regions span residues 1 to 41 (MAEN…NDLP) and 74 to 179 (LRGG…CMNA). Position 2 is an N-acetylalanine (Ala-2). Residues 20-30 (PGFSANDSTDF) show a composition bias toward polar residues. Over residues 80–90 (SSINPGIGNVS) the composition is skewed to low complexity. Phosphoserine is present on Ser-121. Over residues 122-131 (PLSQGDSSAP) the composition is skewed to polar residues. Residue Ser-124 is modified to Phosphoserine; by ATM. Residues 136-150 (QAASTSGPTPAASQA) show a composition bias toward low complexity. The span at 151 to 172 (LNPQAQKQVGLATSSPATSQTG) shows a compositional bias: polar residues. Arg-220 carries the omega-N-methylarginine modification. An interaction with SRCAP region spans residues 227–410 (PTPAMQGASS…GKACQVAHCA (184 aa)). Residues 266–290 (KMGITGNTSPFGQPFSQAGGQPMGA) form a disordered region. Polar residues predominate over residues 270-284 (TGNTSPFGQPFSQAG). The TAZ-type 1 zinc finger occupies 347–433 (DPEKRKLIQQ…RHDCPVCLPL (87 aa)). His-363, Cys-367, Cys-380, Cys-385, His-394, Cys-398, Cys-404, Cys-409, His-418, Cys-422, Cys-427, and Cys-430 together coordinate Zn(2+). The region spanning 587–666 (GVRKGWHEHV…KIYKIQKELE (80 aa)) is the KIX domain. Asymmetric dimethylarginine occurs at positions 601 and 625. N6-acetyllysine is present on Lys-657. Polar residues-rich tracts occupy residues 794–805 (LPQNQFPSSSGA) and 814–823 (PAQTGVSQGQ). The tract at residues 794–1083 (LPQNQFPSSS…STSPSQPRKK (290 aa)) is disordered. Pro residues-rich tracts occupy residues 844–860 (PCPP…PPPA) and 876–885 (GMTPPQPAAP). Composition is skewed to low complexity over residues 886–929 (TQPS…VTPQ) and 937–952 (PSVA…PTPV). Residues 973–988 (PTPSSVASAETNSQQP) are compositionally biased toward polar residues. Lys-998 is covalently cross-linked (Glycyl lysine isopeptide (Lys-Gly) (interchain with G-Cter in SUMO1)). The span at 1011–1021 (GESKGEPRSEM) shows a compositional bias: basic and acidic residues. N6-acetyllysine is present on Lys-1014. Position 1030 is a phosphoserine (Ser-1030). Residues 1032–1059 (VKEETDIAEQKSEPMEVDEKKPEVKVEV) show a composition bias toward basic and acidic residues. Residues Lys-1033 and Lys-1056 each participate in a glycyl lysine isopeptide (Lys-Gly) (interchain with G-Cter in SUMO1) cross-link. Positions 1066–1078 (SSNGTASQSTSPS) are enriched in low complexity. Ser-1076 bears the Phosphoserine mark. The region spanning 1085–1192 (FKPEELRQAL…EVFEQEIDPV (108 aa)) is the Bromo domain. Residues 1124 to 1170 (DYFDIVKNPMDLSTIKRKLDTGQYQEPWQYVDDVWLMFNNAWLYNRK) form an interaction with histone region. The segment at 1162 to 1180 (NNAWLYNRKTSRVYKFCSK) is interaction with ASF1A. An N6-acetyllysine modification is found at Lys-1216. The region spanning 1323–1700 (KFSAKRLQTT…MLVELHTQGQ (378 aa)) is the CBP/p300-type HAT domain. 2 positions are modified to phosphoserine; by IKKA: Ser-1382 and Ser-1386. The interval 1433–1435 (YLD) is interaction with histone. Acetyl-CoA-binding positions include 1434-1436 (LDS), 1446-1447 (RT), Ile-1493, Arg-1498, and Trp-1502. Residues 1460–1891 (YVKKLGYVTG…LPSPTSAPPG (432 aa)) form an interaction with TRERF1 region. A compositionally biased stretch (basic and acidic residues) spans 1556–1568 (LEQEEEERKKEES). The interval 1556-1615 (LEQEEEERKKEESTAASETTEGSQGDSKNAKKKNNKKTNKNKSSISRANKKKPSMPNVSN) is disordered. Lys-1583, Lys-1591, Lys-1592, Lys-1595, and Lys-1597 each carry N6-acetyllysine. Residues 1585–1595 (AKKKNNKKTNK) show a composition bias toward basic residues. The segment at 1702-1750 (RFVYTCNECKHHVETRWHCTVCEDYDLCINCYNTKSHAHKMVKWGLGLD) adopts a ZZ-type zinc-finger fold. 8 residues coordinate Zn(2+): Cys-1707, Cys-1710, Cys-1720, Cys-1723, Cys-1729, Cys-1732, His-1738, and His-1740. An N6-acetyllysine mark is found at Lys-1741 and Lys-1744. Ser-1763 is modified (phosphoserine). The segment at 1765–1846 (QESRRLSIQR…KCPVPFCLNI (82 aa)) adopts a TAZ-type 2 zinc-finger fold. 2 disordered regions span residues 1874 to 1959 (TRNV…VEAA) and 1977 to 2028 (INNS…PLPQ). Over residues 1900–1912 (PQTPQPPAQPQPS) the composition is skewed to pro residues. A compositionally biased stretch (polar residues) spans 1925 to 1940 (ARTQPPTTVSTGKPTS). Positions 1943 to 1954 (PAPPPPAQPPPA) are enriched in pro residues. Residues 2018–2027 (PGQWQQAPLP) are compositionally biased toward low complexity. Ser-2063, Ser-2076, and Ser-2079 each carry phosphoserine. Low complexity-rich tracts occupy residues 2112-2137 (QPGM…HQQP), 2146-2160 (QAGV…QQQA), 2196-2219 (QLLQ…QGSA), 2228-2263 (HGQF…SMGQ), and 2294-2305 (RILQQQQMKQQI). Disordered regions lie at residues 2112 to 2263 (QPGM…SMGQ) and 2294 to 2433 (RILQ…TTGD). Polar residues-rich tracts occupy residues 2315 to 2327 (SPQQ…QPQA) and 2334 to 2343 (QIATSLSNQV). Positions 2349–2372 (VQSPRPQSQPPHSSPSPRIQPQPS) are enriched in pro residues. Ser-2351 is modified (phosphoserine). Polar residues predominate over residues 2411–2424 (QLNTPSRSALSSEL).

In terms of assembly, found in a complex containing NCOA2; NCOA3; IKKA; IKKB and IKBKG. Probably part of a complex with HIF1A and EP300. Interacts with GATA1; the interaction results in acetylation and enhancement of transcriptional activity of GATA1. Interacts with MAF and ZCCHC12. Interacts with DAXX; the interaction is dependent on CBP sumoylation and results in suppression of the transcriptional activity via recruitment of HDAC2 to DAXX. Interacts with phosphorylated CREB1. Interacts with CITED4 (C-terminal region). Interacts (via the TAZ-type 1 domain) with HIF1A. Interacts with SRCAP, CARM1, ELF3, MLLT7/FOXO4, N4BP2, NCOA1, NCOA3, NCOA6, PCAF, DDX5, DDX17, PELP1, PML, SMAD1, SMAD2, SMAD3, SPIB and TRERF1. Interacts with KLF1; the interaction results in acetylation of KLF1 and enhancement of its transcriptional activity. Interacts with MTDH. Interacts with NFATC4. Interacts with MAFG; the interaction acetylates MAFG in the basic region and stimulates NFE2 transcriptional activity through increasing its DNA-binding activity. Interacts with IRF2; the interaction acetylates IRF2 and regulates its activity on the H4 promoter. Interacts with IRF3 (when phosphorylated); forming the dsRNA-activated factor 1 (DRAF1), a complex which activates the transcription of the type I interferon genes. Interacts (via N-terminus) with SS18L1/CREST (via C-terminus). Interacts with MECOM. Interacts with CITED1 (via C-terminus). Interacts with FOXO1; the interaction acetylates FOXO1 and inhibits its transcriptional activity. Interacts with NPAS2, CLOCK and BMAL1. Interacts with ASF1A and ASF1B; this promotes histone acetylation. Interacts with acetylated TP53/p53 and with the acetylated histones H3 and H4. Interacts (via transactivation domain and C-terminus) with PCNA; the interaction occurs on chromatin in UV-irradiated damaged cells. Interacts with DHX9 (via N-terminus); this interaction mediates association with RNA polymerase II holoenzyme and stimulates CREB-dependent transcriptional activation. Interacts with SMAD4; negatively regulated by ZBTB7A. Interacts with DUX4 (via C-terminus). Forms a complex with KMT2A and CREB1. Interacts with DDX3X; this interaction may facilitate HNF4A acetylation. Interacts with MSX1; the interaction may inhibit MSX1 autoinactivation. Interacts with ACSS2. (Microbial infection) Interacts with HTLV-1 Tax, p30II and HBZ. As to quaternary structure, (Microbial infection) Interacts with human herpes virus 8/HHV-8 protein vIRF-1; this interaction inhibits CREBBP binding to IRF3. In terms of assembly, (Microbial infection) Interacts with HIV-1 Tat. Methylation of the KIX domain by CARM1 blocks association with CREB. This results in the blockade of CREB signaling, and in activation of apoptotic response. In terms of processing, phosphorylated by CHUK/IKKA at Ser-1382 and Ser-1386; these phosphorylations promote cell growth by switching the binding preference of CREBBP from TP53 to NF-kappa-B. Phosphorylated by _ at Ser-124 in response to DNA damage, promoting interaction with MRE11 and lactylation of MRE11. Post-translationally, sumoylation negatively regulates transcriptional activity via the recruitment of DAAX. Autoacetylation is required for binding to protein substrates, such as acetylated histones and acetylated TP53/p53. Autoacetylation is induced by glucose and fatty acids.

The protein localises to the cytoplasm. It is found in the nucleus. It catalyses the reaction L-lysyl-[histone] + acetyl-CoA = N(6)-acetyl-L-lysyl-[histone] + CoA + H(+). It carries out the reaction L-lysyl-[protein] + acetyl-CoA = N(6)-acetyl-L-lysyl-[protein] + CoA + H(+). The catalysed reaction is (S)-lactoyl-CoA + L-lysyl-[protein] = N(6)-[(S)-lactoyl]-L-lysyl-[protein] + CoA + H(+). Functionally, acetylates histones, giving a specific tag for transcriptional activation. Mediates acetylation of histone H3 at 'Lys-18' and 'Lys-27' (H3K18ac and H3K27ac, respectively). Also acetylates non-histone proteins, like DDX21, FBL, IRF2, MAFG, NCOA3, POLR1E/PAF53 and FOXO1. Binds specifically to phosphorylated CREB and enhances its transcriptional activity toward cAMP-responsive genes. Acts as a coactivator of ALX1. Acts as a circadian transcriptional coactivator which enhances the activity of the circadian transcriptional activators: NPAS2-BMAL1 and CLOCK-BMAL1 heterodimers. Acetylates PCNA; acetylation promotes removal of chromatin-bound PCNA and its degradation during nucleotide excision repair (NER). Acetylates POLR1E/PAF53, leading to decreased association of RNA polymerase I with the rDNA promoter region and coding region. Acetylates DDX21, thereby inhibiting DDX21 helicase activity. Acetylates FBL, preventing methylation of 'Gln-105' of histone H2A (H2AQ104me). In addition to protein acetyltransferase, can use different acyl-CoA substrates, such as lactoyl-CoA, and is able to mediate protein lactylation. Catalyzes lactylation of MRE11 in response to DNA damage, thereby promoting DNA double-strand breaks (DSBs) via homologous recombination (HR). Functions as a transcriptional coactivator for SMAD4 in the TGF-beta signaling pathway. This is CREB-binding protein from Homo sapiens (Human).